Reading from the N-terminus, the 381-residue chain is Cytochrome b (381 aa).

4 helical membrane-spanning segments follow: residues 34-54 (FGSLLGLCLIIQILTGLFLAM), 78-99 (WLIRNIHANGASLFFICVYLHI), 114-134 (WNIGVILLFLLMATAFVGYVL), and 179-199 (FFAFHFLLPFLILALTIIHLL). The heme b site is built by His84 and His98. The heme b site is built by His183 and His197. A ubiquinone is bound at residue His202. 4 helical membrane passes run 227–247 (YKDLLGFFVMIFFLTTLALFM), 289–309 (LGGVLALLFSIFILMLVPLLH), 321–341 (LTQIFFWLLVANSIILTWIGG), and 348–368 (FITVGQIASVSYFSLFLIIMP).

The protein belongs to the cytochrome b family. In terms of assembly, the cytochrome bc1 complex contains 3 respiratory subunits (MT-CYB, CYC1 and UQCRFS1), 2 core proteins (UQCRC1 and UQCRC2) and probably 6 low-molecular weight proteins. Heme b serves as cofactor.

Its subcellular location is the mitochondrion inner membrane. Functionally, component of the ubiquinol-cytochrome c reductase complex (complex III or cytochrome b-c1 complex) that is part of the mitochondrial respiratory chain. The b-c1 complex mediates electron transfer from ubiquinol to cytochrome c. Contributes to the generation of a proton gradient across the mitochondrial membrane that is then used for ATP synthesis. The sequence is that of Cytochrome b (mt-cyb) from Sphyrna tiburo tiburo (Hammerhead shark).